Here is a 428-residue protein sequence, read N- to C-terminus: Glutamate-1-semialdehyde 2,1-aminomutase (428 aa).

K265 carries the N6-(pyridoxal phosphate)lysine modification.

Belongs to the class-III pyridoxal-phosphate-dependent aminotransferase family. HemL subfamily. In terms of assembly, homodimer. Requires pyridoxal 5'-phosphate as cofactor.

It localises to the cytoplasm. The enzyme catalyses (S)-4-amino-5-oxopentanoate = 5-aminolevulinate. The protein operates within porphyrin-containing compound metabolism; protoporphyrin-IX biosynthesis; 5-aminolevulinate from L-glutamyl-tRNA(Glu): step 2/2. In Aeromonas hydrophila subsp. hydrophila (strain ATCC 7966 / DSM 30187 / BCRC 13018 / CCUG 14551 / JCM 1027 / KCTC 2358 / NCIMB 9240 / NCTC 8049), this protein is Glutamate-1-semialdehyde 2,1-aminomutase.